The following is a 501-amino-acid chain: Xylulose kinase (501 aa).

Substrate is bound at residue Met-81–His-82. The Proton acceptor role is filled by Asp-239.

This sequence belongs to the FGGY kinase family.

The catalysed reaction is D-xylulose + ATP = D-xylulose 5-phosphate + ADP + H(+). In terms of biological role, catalyzes the phosphorylation of D-xylulose to D-xylulose 5-phosphate. The chain is Xylulose kinase from Lactococcus lactis subsp. lactis (strain IL1403) (Streptococcus lactis).